The primary structure comprises 231 residues: Deoxyribose-phosphate aldolase (231 aa).

Residue Asp-86 is the Proton donor/acceptor of the active site. Lys-147 (schiff-base intermediate with acetaldehyde) is an active-site residue. The Proton donor/acceptor role is filled by Lys-172. The interval 206 to 231 (WQAETAGETVTEPESDRDGADTTDGY) is disordered.

Belongs to the DeoC/FbaB aldolase family. DeoC type 1 subfamily.

It is found in the cytoplasm. It carries out the reaction 2-deoxy-D-ribose 5-phosphate = D-glyceraldehyde 3-phosphate + acetaldehyde. It functions in the pathway carbohydrate degradation; 2-deoxy-D-ribose 1-phosphate degradation; D-glyceraldehyde 3-phosphate and acetaldehyde from 2-deoxy-alpha-D-ribose 1-phosphate: step 2/2. Its function is as follows. Catalyzes a reversible aldol reaction between acetaldehyde and D-glyceraldehyde 3-phosphate to generate 2-deoxy-D-ribose 5-phosphate. This Haloarcula marismortui (strain ATCC 43049 / DSM 3752 / JCM 8966 / VKM B-1809) (Halobacterium marismortui) protein is Deoxyribose-phosphate aldolase.